We begin with the raw amino-acid sequence, 805 residues long: Centrosomal protein of 85 kDa-like (805 aa).

Disordered regions lie at residues M1–D27 and R50–K89. S15 is subject to Phosphoserine. Residues A60–D74 show a composition bias toward polar residues. S207 bears the Phosphoserine mark. The stretch at S439–T682 forms a coiled coil.

The protein belongs to the CEP85 family. In terms of tissue distribution, isoform 1 and isoform 4 are expressed in spleen, lymph, thymus, tonsil and peripheral blood leukocytes, with isoform 1 expressed at higher levels. Isoform 4 is detected in K-562 leukemia cells and in the blood of precursor T lymphoblastic lymphoma (T-ALL) patients.

It is found in the cytoplasm. The protein resides in the cytoskeleton. The protein localises to the microtubule organizing center. Its subcellular location is the centrosome. Its function is as follows. Plays an essential role in neuronal cell migration. This is Centrosomal protein of 85 kDa-like from Homo sapiens (Human).